The chain runs to 251 residues: CDP-diacylglycerol pyrophosphatase (251 aa).

Residues 4 to 24 traverse the membrane as a helical segment; sequence AGLLFLVMIVIAVVAAGIGYW.

Belongs to the Cdh family.

The protein localises to the cell inner membrane. The catalysed reaction is a CDP-1,2-diacyl-sn-glycerol + H2O = a 1,2-diacyl-sn-glycero-3-phosphate + CMP + 2 H(+). The protein operates within phospholipid metabolism; CDP-diacylglycerol degradation; phosphatidate from CDP-diacylglycerol: step 1/1. The chain is CDP-diacylglycerol pyrophosphatase from Escherichia coli (strain SE11).